The sequence spans 182 residues: MLKRRSNALITLSRTKLFPITTVAYYHRRLLNQQRRAVSTSPKKEIKSLEDLANLDSLDGVDTELIRDLINEHTTKLNIKKELDMLKKFSQEEESGHEIPVKRFIRPLWMFILMGSSVYLLLHFSWWKLEHEERESQLKKEVEILEHQLNELIIQDKTHNTSRGKGSNESTHMKPWYRRWFW.

The N-terminal 45 residues, 1-45 (MLKRRSNALITLSRTKLFPITTVAYYHRRLLNQQRRAVSTSPKKE), are a transit peptide targeting the mitochondrion. Residues 46 to 107 (IKSLEDLANL…EIPVKRFIRP (62 aa)) lie on the Mitochondrial matrix side of the membrane. Residues 108-127 (LWMFILMGSSVYLLLHFSWW) traverse the membrane as a helical segment. A coiled-coil region spans residues 128–158 (KLEHEERESQLKKEVEILEHQLNELIIQDKT). Over 128 to 182 (KLEHEERESQLKKEVEILEHQLNELIIQDKTHNTSRGKGSNESTHMKPWYRRWFW) the chain is Mitochondrial intermembrane.

It belongs to the INA17 family. As to quaternary structure, component of the inner membrane assembly (INA) complex, composed of INA17 and INA22. Interacts with a subset of F(1)F(0)-ATP synthase subunits of the F(1)-domain and the peripheral stalk.

It localises to the mitochondrion inner membrane. Its function is as follows. Component of the INA complex (INAC) that promotes the biogenesis of mitochondrial F(1)F(0)-ATP synthase. INAC facilitates the assembly of the peripheral stalk and promotes the assembly of the catalytic F(1)-domain with the membrane-embedded F(0)-domain. In Saccharomyces cerevisiae (strain YJM789) (Baker's yeast), this protein is Inner membrane assembly complex subunit 17.